Reading from the N-terminus, the 35-residue chain is Photosystem II reaction center protein T (35 aa).

The chain crosses the membrane as a helical span at residues 3 to 23 (ALVYTFLLVSTLGIIFFAIFF).

It belongs to the PsbT family. In terms of assembly, PSII is composed of 1 copy each of membrane proteins PsbA, PsbB, PsbC, PsbD, PsbE, PsbF, PsbH, PsbI, PsbJ, PsbK, PsbL, PsbM, PsbT, PsbY, PsbZ, Psb30/Ycf12, at least 3 peripheral proteins of the oxygen-evolving complex and a large number of cofactors. It forms dimeric complexes.

The protein resides in the plastid. The protein localises to the chloroplast thylakoid membrane. In terms of biological role, found at the monomer-monomer interface of the photosystem II (PS II) dimer, plays a role in assembly and dimerization of PSII. PSII is a light-driven water plastoquinone oxidoreductase, using light energy to abstract electrons from H(2)O, generating a proton gradient subsequently used for ATP formation. The polypeptide is Photosystem II reaction center protein T (Asarum canadense (Wild ginger)).